A 1480-amino-acid polypeptide reads, in one-letter code: Cystic fibrosis transmembrane conductance regulator (1480 aa).

Residues 1–77 are Cytoplasmic-facing; that stretch reads MQRSPLEKAS…KLINALRRCF (77 aa). The chain crosses the membrane as a helical span at residues 78-98; that stretch reads FWRFMFYGIFLYLGEVTKAVQ. Positions 81-365 constitute an ABC transmembrane type-1 1 domain; sequence FMFYGIFLYL…WAVQTWYDSL (285 aa). Topologically, residues 99-122 are extracellular; the sequence is PLLLGRIIASYDPDNKEERSIAIY. A helical transmembrane segment spans residues 123-146; sequence LGIGLCLLFIVRTLLLHPAIFGLH. The Cytoplasmic segment spans residues 147–195; that stretch reads HIGMQMRIAMFSLIYKKTLKLSSRVLDKISIGQLVSLLSNNLNKFDEGL. A helical membrane pass occupies residues 196–216; sequence ALAHFVWIAPLQVALLMGLIW. Residues 217–222 lie on the Extracellular side of the membrane; it reads ELLQAS. A helical transmembrane segment spans residues 223 to 243; sequence AFCGLGFLIVLALFQAGLGRM. The Cytoplasmic segment spans residues 244–298; that stretch reads MMKYRDQRAGKINERLVITSEMIENIQSVKAYCWEEAMEKMIENLRQTELKLTRK. Residues 299-319 traverse the membrane as a helical segment; it reads AAYVRYFNSSAFFFSGFFVVF. The Extracellular portion of the chain corresponds to 320–339; the sequence is LSVLPYALIKGIVLRKIFTT. A helical transmembrane segment spans residues 340–358; that stretch reads ISFCIVLRMAVTRQFPWAV. The Cytoplasmic portion of the chain corresponds to 359–858; it reads QTWYDSLGAI…YLRYITVHKS (500 aa). Residues Trp-401, Ser-434, 458 to 465, and Gln-493 each bind ATP; that span reads GSTGAGKT. In terms of domain architecture, ABC transporter 1 spans 423-646; the sequence is NGDDSLFFSN…RPDFSSKLMG (224 aa). Cys-524 carries S-palmitoyl cysteine lipidation. Residues Ser-549 and Ser-660 each carry the phosphoserine modification. The segment at 654–831 is disordered R region; it reads SAERRNSILT…EEINEEDLKE (178 aa). Ser-670 carries the phosphoserine; by PKA modification. Lys-688 is covalently cross-linked (Glycyl lysine isopeptide (Lys-Gly) (interchain with G-Cter in ubiquitin)). Ser-700 and Ser-712 each carry phosphoserine. Thr-717 bears the Phosphothreonine mark. Ser-737, Ser-753, Ser-768, Ser-790, Ser-795, and Ser-813 each carry phosphoserine. A helical transmembrane segment spans residues 859-879; sequence LIFVLIWCLVIFLAEVAASLV. In terms of domain architecture, ABC transmembrane type-1 2 spans 859–1155; sequence LIFVLIWCLV…AVNSSIDVDS (297 aa). Residues 880–918 are Extracellular-facing; the sequence is VLWLLGNTPLQDKGNSTHSRNNSYAVIITSTSSYYVFYI. N-linked (GlcNAc...) asparagine glycans are attached at residues Asn-894 and Asn-900. The discontinuously helical transmembrane segment at 919–939 threads the bilayer; the sequence is YVGVADTLLAMGFFRGLPLVH. The Cytoplasmic portion of the chain corresponds to 940 to 990; sequence TLITVSKILHNKMLHSVLQAPMSTLNTLKAGGILNRFSKDIAILDDLLPLT. Residues 991–1011 form a helical membrane-spanning segment; it reads IFDFIQLLLIVIGAIAVVAVL. Residues 1012–1013 lie on the Extracellular side of the membrane; the sequence is QP. The chain crosses the membrane as a helical span at residues 1014 to 1034; it reads YIFVATVPVIVAFIMLRAYFL. At 1035-1095 the chain is on the cytoplasmic side; that stretch reads QTSQQLKQLE…TANWFLYLST (61 aa). A helical transmembrane segment spans residues 1096–1116; the sequence is LRWFQMRIEMIFVIFFIAVTF. Over 1117–1130 the chain is Extracellular; it reads ISILTTGEGEGRVG. A helical transmembrane segment spans residues 1131 to 1151; it reads IILTLAMNIMSTLQWAVNSSI. At 1152–1480 the chain is on the cytoplasmic side; sequence DVDSLMRSVS…TEEEVQDTRL (329 aa). The ABC transporter 2 domain occupies 1210 to 1443; the sequence is MTVKDLTAKY…RSLFQQAISP (234 aa). Residues Tyr-1219 and 1244–1251 contribute to the ATP site; that span reads GRTGSGKS. Residues 1386 to 1480 are interaction with GORASP2; that stretch reads RTLKQAFADC…TEEEVQDTRL (95 aa). Cys-1395 is lipidated: S-palmitoyl cysteine. Residues Ser-1444 and Ser-1456 each carry the phosphoserine modification. The disordered stretch occupies residues 1452-1480; it reads HRNSSKCKSKPQIAALKEETEEEVQDTRL. Residues 1470 to 1480 are compositionally biased toward acidic residues; that stretch reads ETEEEVQDTRL. A PDZ-binding motif is present at residues 1478-1480; that stretch reads TRL.

The protein belongs to the ABC transporter superfamily. ABCC family. CFTR transporter (TC 3.A.1.202) subfamily. In terms of assembly, monomer; does not require oligomerization for channel activity. May form oligomers in the membrane. Interacts with SLC26A3, SLC26A6 and NHERF1. Interacts with SHANK2. Interacts with MYO6. Interacts (via C-terminus) with GOPC (via PDZ domain); this promotes CFTR internalization and thereby decreases channel activity. Interacts with SLC4A7 through NHERF1. Found in a complex with MYO5B and RAB11A. Interacts with ANO1. Interacts with SLC26A8. Interacts with AHCYL1; the interaction increases CFTR activity. Interacts with CSE1L. The core-glycosylated form interacts with GORASP2 (via PDZ GRASP-type 1 domain) in respone to ER stress. Interacts with MARCHF2; the interaction leads to CFTR ubiqtuitination and degradation. Interacts with ADGRG2. In terms of processing, N-glycosylated. Post-translationally, phosphorylated; cAMP treatment promotes phosphorylation and activates the channel. Dephosphorylation decreases the ATPase activity (in vitro). Phosphorylation at PKA sites activates the channel. Phosphorylation at PKC sites enhances the response to phosphorylation by PKA. Phosphorylated by AMPK; this inhibits channel activity. Ubiquitinated, leading to its degradation in the lysosome. Deubiquitination by USP10 in early endosomes enhances its endocytic recycling to the cell membrane. Ubiquitinated by RNF185 during ER stress. Ubiquitinated by MARCHF2.

It is found in the apical cell membrane. The protein resides in the early endosome membrane. Its subcellular location is the cell membrane. The protein localises to the recycling endosome membrane. It localises to the endoplasmic reticulum membrane. It is found in the nucleus. The enzyme catalyses ATP + H2O + closed Cl(-) channel = ADP + phosphate + open Cl(-) channel.. It catalyses the reaction chloride(in) = chloride(out). It carries out the reaction hydrogencarbonate(in) = hydrogencarbonate(out). The catalysed reaction is ATP + H2O = ADP + phosphate + H(+). Its function is as follows. Epithelial ion channel that plays an important role in the regulation of epithelial ion and water transport and fluid homeostasis. Mediates the transport of chloride ions across the cell membrane. Possesses an intrinsic ATPase activity and utilizes ATP to gate its channel; the passive flow of anions through the channel is gated by cycles of ATP binding and hydrolysis by the ATP-binding domains. The ion channel is also permeable to HCO(3)(-); selectivity depends on the extracellular chloride concentration. Exerts its function also by modulating the activity of other ion channels and transporters. Contributes to the regulation of the pH and the ion content of the epithelial fluid layer. Modulates the activity of the epithelial sodium channel (ENaC) complex, in part by regulating the cell surface expression of the ENaC complex. May regulate bicarbonate secretion and salvage in epithelial cells by regulating the transporter SLC4A7. Can inhibit the chloride channel activity of ANO1. Plays a role in the chloride and bicarbonate homeostasis during sperm epididymal maturation and capacitation. This chain is Cystic fibrosis transmembrane conductance regulator, found in Pongo abelii (Sumatran orangutan).